Consider the following 103-residue polypeptide: Preprofallaxidin-6 (103 aa).

The N-terminal stretch at 1–22 (MASLKKSLFLVLFLGFVSLSIC) is a signal peptide. Residues 23 to 49 (EEEKRENEGNENEEEDENHEEGSEEKR) constitute a propeptide that is removed on maturation. Residues 24–50 (EEKRENEGNENEEEDENHEEGSEEKRG) form a disordered region. Positions 31 to 41 (GNENEEEDENH) are enriched in acidic residues. L65 carries the post-translational modification Leucine amide. The tract at residues 67–103 (KRSEEKRYHPFGKRSEEKRYHPFGKRSEEKRYPPIGK) is disordered. Positions 69 to 73 (SEEKR) are excised as a propeptide. F77 is subject to Phenylalanine amide. A propeptide spanning residues 81–85 (SEEKR) is cleaved from the precursor. F89 bears the Phenylalanine amide mark. A propeptide spanning residues 93-97 (SEEKR) is cleaved from the precursor. I101 carries the post-translational modification Isoleucine amide.

Belongs to the frog skin active peptide (FSAP) family. Brevinin subfamily. In terms of tissue distribution, expressed by the skin glands.

It localises to the secreted. Its function is as follows. Fallaxidin-1.3 shows no antibacterial activity against Gram-positive or Gram-negative bacteria. Does not inhibit the formation of NO by neuronal nitric oxide synthase. Has no effect on splenocyte proliferation or smooth muscle contraction. Functionally, fallaxidin-1.4 shows no antibacterial activity against Gram-positive or Gram-negative bacteria. Does not inhibit the formation of NO by neuronal nitric oxide synthase. Has no effect on splenocyte proliferation or smooth muscle contraction. Fallaxidin-3.1 shows antibacterial activity against the Gram-positive bacteria E.faecalis (MIC=100 uM) and L.lactis (MIC=100 uM). No antibacterial activity against the Gram-positive bacteria B.cereus, L.innocua, M.luteus, S.epidermidis, S.uberis and S.aureus, or the Gram-negative bacteria E.cloacae and E.coli. The protein is Preprofallaxidin-6 of Litoria fallax (Eastern dwarf tree frog).